A 364-amino-acid polypeptide reads, in one-letter code: Cobalt-precorrin-5B C(1)-methyltransferase (364 aa).

It belongs to the CbiD family.

It catalyses the reaction Co-precorrin-5B + S-adenosyl-L-methionine = Co-precorrin-6A + S-adenosyl-L-homocysteine. The protein operates within cofactor biosynthesis; adenosylcobalamin biosynthesis; cob(II)yrinate a,c-diamide from sirohydrochlorin (anaerobic route): step 6/10. Its function is as follows. Catalyzes the methylation of C-1 in cobalt-precorrin-5B to form cobalt-precorrin-6A. The chain is Cobalt-precorrin-5B C(1)-methyltransferase from Thermoplasma acidophilum (strain ATCC 25905 / DSM 1728 / JCM 9062 / NBRC 15155 / AMRC-C165).